A 287-amino-acid polypeptide reads, in one-letter code: CRISPR-associated endoribonuclease Cas6 1 (287 aa).

This sequence belongs to the CRISPR-associated endoribonuclease Cas6 family. Part of the aCascade ribonucleoprotein complex, minimally composed of Csa2 and Cas5a, which binds crRNA. Other possible components of aCascade in strain P1 are Cas6b (SSO1437) and Csa5 (SSO1443), while SSO1399, Cas5b (SSO1400) and SSO1401 have sometimes been seen weakly associated. Csa2 is probably the major RNA-binding subunit. The Csa2-Cas5a-crRNA complex also binds target DNA homologous to crRNA, probably forming an R-loop. Purified aCascade forms a filament about 6 nm in width.

Its function is as follows. CRISPR (clustered regularly interspaced short palindromic repeat) is an adaptive immune system that provides protection against mobile genetic elements (viruses, transposable elements and conjugative plasmids). CRISPR clusters contain spacers, sequences complementary to antecedent mobile elements, and target invading nucleic acids. CRISPR clusters are transcribed and processed into CRISPR RNA (crRNA). The sequence is that of CRISPR-associated endoribonuclease Cas6 1 (cas6a) from Saccharolobus solfataricus (strain ATCC 35092 / DSM 1617 / JCM 11322 / P2) (Sulfolobus solfataricus).